The chain runs to 151 residues: Large ribosomal subunit protein bL9 (151 aa).

Belongs to the bacterial ribosomal protein bL9 family.

Functionally, binds to the 23S rRNA. The polypeptide is Large ribosomal subunit protein bL9 (Nitrosomonas europaea (strain ATCC 19718 / CIP 103999 / KCTC 2705 / NBRC 14298)).